The chain runs to 271 residues: HTH-type transcriptional repressor AllR (271 aa).

An HTH iclR-type domain is found at 21–83 (AQALERGIAI…SQLGWWHIGL (63 aa)). Residues 43–62 (VSDISLNLDLPLSTTFRLLK) constitute a DNA-binding region (H-T-H motif). In terms of domain architecture, IclR-ED spans 98-267 (VLSVAGPFMR…ARDISTALGL (170 aa)). Glyoxylate is bound by residues 154–156 (SGA), Asp-207, Cys-217, and 234–236 (SIS).

In terms of biological role, negative regulator of allantoin and glyoxylate utilization operons. Binds to the gcl promoter and to the allS-allA intergenic region. This chain is HTH-type transcriptional repressor AllR (allR), found in Escherichia coli (strain UTI89 / UPEC).